The following is a 60-amino-acid chain: Large ribosomal subunit protein bL32 (60 aa).

Positions methionine 1 to glycine 46 are disordered. Positions serine 9–histidine 19 are enriched in basic residues.

It belongs to the bacterial ribosomal protein bL32 family.

The protein is Large ribosomal subunit protein bL32 of Leptothrix cholodnii (strain ATCC 51168 / LMG 8142 / SP-6) (Leptothrix discophora (strain SP-6)).